The primary structure comprises 479 residues: Ribulose bisphosphate carboxylase large chain (479 aa).

The propeptide occupies 1–2; the sequence is MS. Pro3 bears the N-acetylproline mark. Residues Asn123 and Thr173 each contribute to the substrate site. The active-site Proton acceptor is the Lys175. Position 177 (Lys177) interacts with substrate. Mg(2+) is bound by residues Lys201, Asp203, and Glu204. At Lys201 the chain carries N6-carboxylysine. His294 (proton acceptor) is an active-site residue. Arg295, His327, and Ser379 together coordinate substrate.

The protein belongs to the RuBisCO large chain family. Type I subfamily. Heterohexadecamer of 8 large chains and 8 small chains; disulfide-linked. The disulfide link is formed within the large subunit homodimers. Mg(2+) serves as cofactor. In terms of processing, the disulfide bond which can form in the large chain dimeric partners within the hexadecamer appears to be associated with oxidative stress and protein turnover.

The protein localises to the plastid. It localises to the chloroplast. The catalysed reaction is 2 (2R)-3-phosphoglycerate + 2 H(+) = D-ribulose 1,5-bisphosphate + CO2 + H2O. It carries out the reaction D-ribulose 1,5-bisphosphate + O2 = 2-phosphoglycolate + (2R)-3-phosphoglycerate + 2 H(+). Its function is as follows. RuBisCO catalyzes two reactions: the carboxylation of D-ribulose 1,5-bisphosphate, the primary event in carbon dioxide fixation, as well as the oxidative fragmentation of the pentose substrate in the photorespiration process. Both reactions occur simultaneously and in competition at the same active site. In Hordeum vulgare (Barley), this protein is Ribulose bisphosphate carboxylase large chain.